The chain runs to 486 residues: MNSMFCSELQQALPQMSEDVAVTAQTILNGTPPHNHFRKEWLAGAAGTTTPTTTSGGQMMTLSPPAGDGPGSAGSMAPESTSSLSDLSGDAEGVWSIDIDQAFQEALAIYPPCGRRKIIISDEGKMYGRNELIARYIKLRCGKTRTRKQVSSHIQVLARKKLRDEQAKKKGDIPSLLQQASPPGGVKSPSAVVFPPVSAAVAAITEISPQSSYSSIVPKVETDQISQQLFKSLPLWSFQQTPGLPIGMDLSQLVFQQSSPDKTVSPVKSEVVEETKPIASSQLTLHSFSAYVKCNKTSLRTELVKIENTLEKDDIDISVFYEKYPKLLRELFEKSEKKDVFFLAKCWANINVSDDVQNCQYAVDSFYSSREKFQLKVSTMACSFGNQAVEKIEQYFPIEFDGSYSFILNNSPMCDYMVKFIAELKKLNVIETMNNVLENFTVLQIVTNSETDELLMVLCFVFEVSQEPEPSCSVYRLIDGGGDSDE.

Positions 47–57 are enriched in low complexity; the sequence is GTTTPTTTSGG. The segment at 47–87 is disordered; that stretch reads GTTTPTTTSGGQMMTLSPPAGDGPGSAGSMAPESTSSLSDL. Positions 88-164 form a DNA-binding region, TEA; that stretch reads SGDAEGVWSI…QVLARKKLRD (77 aa). Residues 165-188 form a disordered region; sequence EQAKKKGDIPSLLQQASPPGGVKS.

As to quaternary structure, interacts (via N-terminus) with egl-46 (via C-terminus); the interaction is direct; the interaction may regulate transcription. Interacts with yap-1 (via WW domain); the interaction may regulate transcription. In terms of tissue distribution, expressed in HSN neurons in embryos and in the FLP neurons from the L1 stage through to adults. Not expressed in touch cells. Also expressed in larval hypodermis, intestine, pharyngeal muscle and other neurons. In adults expression is lost from some neurons, is weaker in the hypodermis but remains in the intestine. Expressed in HOB neuron, ray neurons RnA and RnB, and the ray structural cell, Rnst; rays are male-specific genital sensilla (simple sense organs).

The protein resides in the nucleus. In terms of biological role, transcription factor. Binds to DNA sequence motif 5'-CATNNNNAAATGCAT-3' as a heterodimer with egl-46. Represses expression of genes involved in differentiation of touch receptor neurons (TRN), probably acting as a heterodimer with egl-46, perhaps by occupying similar cis-regulatory elements as an unc-86/mec-3 heterodimer. Plays a role in cell fate specification of neurons, including the hook neuron HOB, and touch receptor neurons. Involved in male mating behavior, acting in concert with egl-46, via modulation of expression of polycystins lov-1 and pkd-2, homeodomain protein ceh-26, and neuropeptide-like protein nlp-8. Acts upstream of egl-46 to prevent touch cell differentiation in FLP neurons. Plays a role in neuron differentiation by repressing the expression of zag-1 in FLP neurons, probably acting as a heterodimer with egl-46; because zag-1 represses expression of egl-46 and egl-44, together these proteins form a bistable, negative-feedback loop that regulates the choice between neuronal fates. Also promotes HSN neuron development. In association with egl-46, regulates cell cycle exit in the neuronal Q cell lineage. Plays a role in specifying commissural dendrites of the PVD nociceptive neurons, acting in concert with egl-46. May be involved in thermal stress response downstream of yap-1. This Caenorhabditis elegans protein is Transcription enhancer factor-like protein egl-44 (egl-44).